The following is a 936-amino-acid chain: Protocadherin alpha-5 (936 aa).

Residues M1–G28 form the signal peptide. Topologically, residues Q29–N696 are extracellular. Cadherin domains are found at residues S33–F132, A156–F241, D242–M349, A350–F454, A455–L564, and V580–A677. N-linked (GlcNAc...) asparagine glycosylation occurs at N264. N547 carries an N-linked (GlcNAc...) asparagine glycan. The chain crosses the membrane as a helical span at residues V697–Y717. Over T718–Q936 the chain is Cytoplasmic. Disordered stretches follow at residues S759–R793 and A816–Q936. PXXP repeat units lie at residues P773 to P776, P785 to P788, P818 to P821, K873 to I876, and P877 to T890. Residues P773 to T890 are 5 X 4 AA repeats of P-X-X-P. A compositionally biased stretch (polar residues) spans S774–R786. Residues D895–K909 show a composition bias toward basic and acidic residues.

The protein localises to the cell membrane. Functionally, potential calcium-dependent cell-adhesion protein. May be involved in the establishment and maintenance of specific neuronal connections in the brain. In Homo sapiens (Human), this protein is Protocadherin alpha-5 (PCDHA5).